Consider the following 355-residue polypeptide: Lipopolysaccharide heptosyltransferase 1 (355 aa).

Residues Thr186, Thr187, Lys191, Glu221, Asp260, Thr261, Gly262, and His265 each contribute to the ADP-L-glycero-beta-D-manno-heptose site.

This sequence belongs to the glycosyltransferase 9 family.

It is found in the cell inner membrane. The catalysed reaction is an alpha-Kdo-(2-&gt;4)-alpha-Kdo-(2-&gt;6)-lipid A + ADP-L-glycero-beta-D-manno-heptose = an L-alpha-D-Hep-(1-&gt;5)-[alpha-Kdo-(2-&gt;4)]-alpha-Kdo-(2-&gt;6)-lipid A + ADP + H(+). The protein operates within bacterial outer membrane biogenesis; LPS core biosynthesis. In terms of biological role, glycosyltransferase involved in the biosynthesis of the core oligosaccharide region of lipopolysaccharide (LPS). Catalyzes the addition of the first heptose unit to one 3-deoxy-D-manno-octulosonic acid (Kdo) residue of the Kdo2-lipid A module. This chain is Lipopolysaccharide heptosyltransferase 1, found in Pseudomonas aeruginosa (strain ATCC 15692 / DSM 22644 / CIP 104116 / JCM 14847 / LMG 12228 / 1C / PRS 101 / PAO1).